Here is a 561-residue protein sequence, read N- to C-terminus: DNA ligase B (561 aa).

Residue Lys125 is the N6-AMP-lysine intermediate of the active site.

The protein belongs to the NAD-dependent DNA ligase family. LigB subfamily.

The enzyme catalyses NAD(+) + (deoxyribonucleotide)n-3'-hydroxyl + 5'-phospho-(deoxyribonucleotide)m = (deoxyribonucleotide)n+m + AMP + beta-nicotinamide D-nucleotide.. Functionally, catalyzes the formation of phosphodiester linkages between 5'-phosphoryl and 3'-hydroxyl groups in double-stranded DNA using NAD as a coenzyme and as the energy source for the reaction. In Salmonella paratyphi A (strain AKU_12601), this protein is DNA ligase B.